A 171-amino-acid polypeptide reads, in one-letter code: Lipoprotein signal peptidase (171 aa).

The next 3 membrane-spanning stretches (helical) occupy residues 8–28 (SFLW…YIVV), 64–84 (WQQY…VYFL), and 99–119 (ALII…GFVV). Catalysis depends on residues aspartate 120 and aspartate 138. The chain crosses the membrane as a helical span at residues 133–153 (VFNIADIAICIGAGLLVLDAF).

This sequence belongs to the peptidase A8 family.

It localises to the cell inner membrane. It catalyses the reaction Release of signal peptides from bacterial membrane prolipoproteins. Hydrolyzes -Xaa-Yaa-Zaa-|-(S,diacylglyceryl)Cys-, in which Xaa is hydrophobic (preferably Leu), and Yaa (Ala or Ser) and Zaa (Gly or Ala) have small, neutral side chains.. It participates in protein modification; lipoprotein biosynthesis (signal peptide cleavage). Its function is as follows. This protein specifically catalyzes the removal of signal peptides from prolipoproteins. The protein is Lipoprotein signal peptidase of Haemophilus influenzae (strain ATCC 51907 / DSM 11121 / KW20 / Rd).